A 172-amino-acid polypeptide reads, in one-letter code: Transcriptional repressor NrdR (172 aa).

A zinc finger spans residues 3–34; sequence CPFCSYSDNRVLESRLAEEGESVRRRRECKQC. The ATP-cone domain maps to 49–139; that stretch reads TVVIKRNGRR…VYRKFKGVAD (91 aa).

It belongs to the NrdR family. Zn(2+) serves as cofactor.

Functionally, negatively regulates transcription of bacterial ribonucleotide reductase nrd genes and operons by binding to NrdR-boxes. In Gloeobacter violaceus (strain ATCC 29082 / PCC 7421), this protein is Transcriptional repressor NrdR.